A 205-amino-acid polypeptide reads, in one-letter code: Nuclear transcription factor Y subunit beta (205 aa).

The segment at 1 to 50 (MDGDSSTTDASQLGIAGDYIGGSHYVIQPHDDTEDSMNDHEDTNGSKESF) is a domain. A disordered region spans residues 24–50 (HYVIQPHDDTEDSMNDHEDTNGSKESF). Positions 37–50 (MNDHEDTNGSKESF) are enriched in basic and acidic residues. The b domain stretch occupies residues 51 to 140 (REQDIYLPIA…PLKLYLQKFR (90 aa)). The DNA-binding element occupies 57–63 (LPIANVA). The subunit association domain (SAD) stretch occupies residues 84–95 (VQECVSEFISFI). Residues 141 to 201 (EAMKGEKGIG…SYQQISGVQQ (61 aa)) form a c domain region.

The protein belongs to the NFYB/HAP3 subunit family. Heterotrimeric transcription factor composed of three components, NF-YA, NF-YB and NF-YC. NF-YB and NF-YC must interact and dimerize for NF-YA association and DNA binding.

It localises to the nucleus. In terms of biological role, component of the sequence-specific heterotrimeric transcription factor (NF-Y) which specifically recognizes a 5'-CCAAT-3' box motif found in the promoters of its target genes. NF-Y can function as both an activator and a repressor, depending on its interacting cofactors. The polypeptide is Nuclear transcription factor Y subunit beta (NFYB) (Gallus gallus (Chicken)).